We begin with the raw amino-acid sequence, 398 residues long: Acetate kinase 1 (398 aa).

Asn9 serves as a coordination point for Mg(2+). ATP is bound at residue Lys16. Arg89 lines the substrate pocket. Catalysis depends on Asp146, which acts as the Proton donor/acceptor. Residues 206 to 210 (HLGNG), 281 to 283 (DCR), and 329 to 333 (GIGEN) each bind ATP. Glu384 is a Mg(2+) binding site.

Belongs to the acetokinase family. As to quaternary structure, homodimer. Mg(2+) serves as cofactor. Requires Mn(2+) as cofactor.

Its subcellular location is the cytoplasm. The enzyme catalyses acetate + ATP = acetyl phosphate + ADP. It functions in the pathway metabolic intermediate biosynthesis; acetyl-CoA biosynthesis; acetyl-CoA from acetate: step 1/2. Functionally, catalyzes the formation of acetyl phosphate from acetate and ATP. Can also catalyze the reverse reaction. In Photobacterium profundum (strain SS9), this protein is Acetate kinase 1.